The chain runs to 441 residues: MHIAVVGLSHRTAPVEVREKLSIPEELVERSFNNLKKIDQILEVSILSTCNRLEIYSLVKDPQLGIEAIKSFLLEFSGLEDEILSPHLFNYVQEKAVSHVMRVSAGLDSLVLGEGQILSQVKKMVRLGQDHHSLGPILNRLLTQAVSTGKRVRSETNLGTGAVSISSAAVELAQLKLGQAHGRDQLMTLETEKVAVVGAGRMSRLLLQHLQSKGCCSLTLLNRTRKRAEDLSAAFPDIQIDCQLIDELDSCLSLSTLVFTSTAANEPIIDAEKLINIDRKPLLRLIDIGVPRNISSDAKSVSGIESHDVDDLQEVVSRNQEARQKLALEAEGLIEEECRVFLEWWDSLAAVPTINCLRSSLESIRKEELQKALSRMGPDFSARERKVVEALSKGIINKILHTPVTKLRAPQSRNDRRDSLDVIEKLFNLDVSSSLNKPKNN.

Substrate is bound by residues 49–52 (TCNR), serine 109, 114–116 (EGQ), and glutamine 120. Residue cysteine 50 is the Nucleophile of the active site. 198-203 (GAGRMS) is a binding site for NADP(+).

The protein belongs to the glutamyl-tRNA reductase family. In terms of assembly, homodimer.

It carries out the reaction (S)-4-amino-5-oxopentanoate + tRNA(Glu) + NADP(+) = L-glutamyl-tRNA(Glu) + NADPH + H(+). It functions in the pathway porphyrin-containing compound metabolism; protoporphyrin-IX biosynthesis; 5-aminolevulinate from L-glutamyl-tRNA(Glu): step 1/2. The protein operates within porphyrin-containing compound metabolism; chlorophyll biosynthesis. In terms of biological role, catalyzes the NADPH-dependent reduction of glutamyl-tRNA(Glu) to glutamate 1-semialdehyde (GSA). The polypeptide is Glutamyl-tRNA reductase (Prochlorococcus marinus (strain NATL1A)).